Reading from the N-terminus, the 510-residue chain is Protein phosphatase 1H (510 aa).

One can recognise a PPM-type phosphatase domain in the interval 73 to 503; that stretch reads STGYAEVINA…DDISVYVIPL (431 aa). 2 disordered regions span residues 105–128 and 188–225; these read VQST…EGLQ and LGEE…PTRF.

Belongs to the PP2C family.

The protein localises to the nucleus. It is found in the cytoplasm. The catalysed reaction is O-phospho-L-seryl-[protein] + H2O = L-seryl-[protein] + phosphate. The enzyme catalyses O-phospho-L-threonyl-[protein] + H2O = L-threonyl-[protein] + phosphate. The polypeptide is Protein phosphatase 1H (ppm1h) (Xenopus tropicalis (Western clawed frog)).